The chain runs to 370 residues: Nematocyst expressed protein 4 (370 aa).

A signal peptide spans 1–19; sequence MAWTLVLLVLLGTSSCLDA. The segment at 34-55 is disordered; that stretch reads SGSGSGEEGSSGSGSAPEPVRD. The span at 36 to 45 shows a compositional bias: gly residues; that stretch reads SGSGEEGSSG. ShKT domains lie at 70-102, 113-149, and 155-190; these read CLDK…CRFC, CTDA…CKLC, and GKKF…CEVH. Disulfide bonds link cysteine 70–cysteine 102, cysteine 77–cysteine 95, cysteine 84–cysteine 99, cysteine 113–cysteine 149, cysteine 121–cysteine 142, cysteine 131–cysteine 146, cysteine 164–cysteine 183, and cysteine 173–cysteine 187. Residues 306 to 340 are compositionally biased toward pro residues; sequence PYPPPPPPYPEQVPPPPPPPPPPPPPPPYPYPYPY. Residues 306–370 form a disordered region; it reads PYPPPPPPYP…HHKENHSKKS (65 aa). The span at 349 to 370 shows a compositional bias: basic residues; it reads HKSKKHAKHHEKHHKENHSKKS.

It belongs to the NEP3 family. Nematocytes. In late planulae, transcripts are found throughout the ectoderm in nematocytes, with high concentration of expressing cells in the oral pole. In primary polyps, is expressed in nematocytes in the body wall and physa ectoderm and in the upper and lower pharynx.

It localises to the nematocyst. The protein resides in the secreted. The sequence is that of Nematocyst expressed protein 4 from Nematostella vectensis (Starlet sea anemone).